A 128-amino-acid polypeptide reads, in one-letter code: MAPLKKPAVKGGKKKKQVLKFTLDCTHPVEDGIMDAANFEQFLQERIKVNGKAGNLGGGVVSIERSKSKITVTSDIPFSKRYLKYLTKKYLKKNNLRDWLRVVANTKESYELRYFQINQDEEEEEDED.

Belongs to the eukaryotic ribosomal protein eL22 family. In terms of assembly, component of the large ribosomal subunit.

The protein resides in the cytoplasm. Functionally, component of the large ribosomal subunit. The ribosome is a large ribonucleoprotein complex responsible for the synthesis of proteins in the cell. In Ictalurus punctatus (Channel catfish), this protein is Large ribosomal subunit protein eL22 (rpl22).